We begin with the raw amino-acid sequence, 207 residues long: Large ribosomal subunit protein uL4 (207 aa).

The segment at 49 to 78 (HAVKNRSAVSGGGRKPWRQKGTGRARQGSI) is disordered.

Belongs to the universal ribosomal protein uL4 family. As to quaternary structure, part of the 50S ribosomal subunit.

Functionally, one of the primary rRNA binding proteins, this protein initially binds near the 5'-end of the 23S rRNA. It is important during the early stages of 50S assembly. It makes multiple contacts with different domains of the 23S rRNA in the assembled 50S subunit and ribosome. Forms part of the polypeptide exit tunnel. This chain is Large ribosomal subunit protein uL4, found in Streptococcus sanguinis (strain SK36).